Reading from the N-terminus, the 321-residue chain is Glutaminase (321 aa).

Positions 69, 120, 165, 172, 196, 248, and 266 each coordinate substrate.

It belongs to the glutaminase family. As to quaternary structure, homotetramer.

The enzyme catalyses L-glutamine + H2O = L-glutamate + NH4(+). The chain is Glutaminase from Bacteroides fragilis (strain YCH46).